A 391-amino-acid chain; its full sequence is Small ribosomal subunit protein bS1 (391 aa).

4 consecutive S1 motif domains span residues 16-90 (GDKV…LSRR), 108-173 (NEII…LSRK), 194-262 (GDVI…LSIK), and 279-348 (NDVI…LSIK).

This sequence belongs to the bacterial ribosomal protein bS1 family.

Its function is as follows. Binds mRNA; thus facilitating recognition of the initiation point. It is needed to translate mRNA with a short Shine-Dalgarno (SD) purine-rich sequence. This is Small ribosomal subunit protein bS1 (rpsA) from Staphylococcus aureus (strain MSSA476).